A 496-amino-acid polypeptide reads, in one-letter code: RNA-binding motif protein, Y chromosome, family 1 member A1 (496 aa).

In terms of domain architecture, RRM spans 8–85 (GKLFIGGLNR…KAIKVEQAKK (78 aa)). Disordered stretches follow at residues 78-349 (IKVE…HRDY) and 452-496 (KDQR…SSRY). Low complexity-rich tracts occupy residues 97-114 (PASS…SARG) and 149-159 (PVKRGPSSRSG). Positions 175 to 184 (NSWMGSQGPM) are enriched in polar residues. Composition is skewed to basic and acidic residues over residues 204-214 (RNDRMSTRHDG), 242-253 (DNGHSNRDEHSS), 276-289 (AYRD…DESY), 313-326 (GYRD…HESY), 335-349 (SSRE…HRDY), and 484-496 (GESR…SSRY).

In terms of assembly, interacts with splicing factor proteins SFRS3/SRP20, TRA2B/SFRS10, KHDRBS1/SAM68 and KHDRBS3. In terms of tissue distribution, testis-specific.

The protein localises to the nucleus. RNA-binding protein involved in pre-mRNA splicing. Required for sperm development. Acts additively with TRA2B to promote exon 7 inclusion of the survival motor neuron SMN. Binds non-specifically to mRNAs. The sequence is that of RNA-binding motif protein, Y chromosome, family 1 member A1 (RBMY1A1) from Homo sapiens (Human).